A 244-amino-acid polypeptide reads, in one-letter code: AA9 family lytic polysaccharide monooxygenase B (244 aa).

The N-terminal stretch at 1–19 (MFLVPLLAALSLSAPKVAA) is a signal peptide. Residue H20 coordinates Cu(2+). Y39 is a binding site for (1,4-beta-D-glucosyl)n. Intrachain disulfides connect C68–C189 and C111–C115. Residue H99 coordinates Cu(2+). The N-linked (GlcNAc...) asparagine glycan is linked to N152. O2 contacts are provided by H178 and Q184. Position 186 (Y186) interacts with Cu(2+). Positions 224, 226, and 229 each coordinate (1,4-beta-D-glucosyl)n. The N-linked (GlcNAc...) asparagine glycan is linked to N233.

The protein belongs to the polysaccharide monooxygenase AA9 family. It depends on Cu(2+) as a cofactor.

The protein localises to the secreted. The catalysed reaction is [(1-&gt;4)-beta-D-glucosyl]n+m + reduced acceptor + O2 = 4-dehydro-beta-D-glucosyl-[(1-&gt;4)-beta-D-glucosyl]n-1 + [(1-&gt;4)-beta-D-glucosyl]m + acceptor + H2O.. In terms of biological role, lytic polysaccharide monooxygenase (LPMO) that depolymerizes crystalline and amorphous polysaccharides via the oxidation of scissile alpha- or beta-(1-4)-glycosidic bonds, yielding specifically C1 oxidation product. Catalysis by LPMOs requires the reduction of the active-site copper from Cu(II) to Cu(I) by a reducing agent and H(2)O(2) or O(2) as a cosubstrate. Displays catalytic activity on insoluble cellulose using I-beta microfibril model substrate. The polypeptide is AA9 family lytic polysaccharide monooxygenase B (Heterobasidion irregulare (strain TC 32-1)).